The following is a 146-amino-acid chain: Ecotin-like protein 1 (146 aa).

It belongs to the protease inhibitor I11 (ecotin) family.

The sequence is that of Ecotin-like protein 1 (ISP1) from Leishmania major.